Reading from the N-terminus, the 735-residue chain is Glutamine-dependent NAD(+) synthetase (735 aa).

Positions 4 to 274 constitute a CN hydrolase domain; it reads LRVATCNLNQ…VEVLDALVDL (271 aa). Glu-44 (proton acceptor; for glutaminase activity) is an active-site residue. The active-site For glutaminase activity is Lys-113. The Nucleophile; for glutaminase activity role is filled by Cys-174. Residues 324–711 form a ligase region; it reads YHRPEEEIAF…STEGELRRRK (388 aa). 354 to 361 serves as a coordination point for ATP; the sequence is PLSGGADS. Ser-356 is a catalytic residue.

It in the C-terminal section; belongs to the NAD synthetase family.

It carries out the reaction deamido-NAD(+) + L-glutamine + ATP + H2O = L-glutamate + AMP + diphosphate + NAD(+) + H(+). Its pathway is cofactor biosynthesis; NAD(+) biosynthesis; NAD(+) from deamido-NAD(+) (L-Gln route): step 1/1. The sequence is that of Glutamine-dependent NAD(+) synthetase from Oryza sativa subsp. indica (Rice).